A 545-amino-acid chain; its full sequence is Glucose-6-phosphate isomerase (545 aa).

Glutamate 345 serves as the catalytic Proton donor. Catalysis depends on residues histidine 376 and lysine 514.

Belongs to the GPI family.

It localises to the cytoplasm. The catalysed reaction is alpha-D-glucose 6-phosphate = beta-D-fructose 6-phosphate. It participates in carbohydrate biosynthesis; gluconeogenesis. Its pathway is carbohydrate degradation; glycolysis; D-glyceraldehyde 3-phosphate and glycerone phosphate from D-glucose: step 2/4. Catalyzes the reversible isomerization of glucose-6-phosphate to fructose-6-phosphate. The polypeptide is Glucose-6-phosphate isomerase (Leptothrix cholodnii (strain ATCC 51168 / LMG 8142 / SP-6) (Leptothrix discophora (strain SP-6))).